The primary structure comprises 178 residues: ATP synthase subunit delta (178 aa).

The protein belongs to the ATPase delta chain family. F-type ATPases have 2 components, F(1) - the catalytic core - and F(0) - the membrane proton channel. F(1) has five subunits: alpha(3), beta(3), gamma(1), delta(1), epsilon(1). F(0) has three main subunits: a(1), b(2) and c(10-14). The alpha and beta chains form an alternating ring which encloses part of the gamma chain. F(1) is attached to F(0) by a central stalk formed by the gamma and epsilon chains, while a peripheral stalk is formed by the delta and b chains.

It is found in the cell inner membrane. In terms of biological role, f(1)F(0) ATP synthase produces ATP from ADP in the presence of a proton or sodium gradient. F-type ATPases consist of two structural domains, F(1) containing the extramembraneous catalytic core and F(0) containing the membrane proton channel, linked together by a central stalk and a peripheral stalk. During catalysis, ATP synthesis in the catalytic domain of F(1) is coupled via a rotary mechanism of the central stalk subunits to proton translocation. Its function is as follows. This protein is part of the stalk that links CF(0) to CF(1). It either transmits conformational changes from CF(0) to CF(1) or is implicated in proton conduction. The protein is ATP synthase subunit delta of Cellvibrio japonicus (strain Ueda107) (Pseudomonas fluorescens subsp. cellulosa).